The chain runs to 287 residues: Probable endonuclease 4 (287 aa).

Zn(2+)-binding residues include H69, H109, E146, D180, H183, H217, D230, H232, and E262.

It belongs to the AP endonuclease 2 family. Zn(2+) is required as a cofactor.

The enzyme catalyses Endonucleolytic cleavage to 5'-phosphooligonucleotide end-products.. In terms of biological role, endonuclease IV plays a role in DNA repair. It cleaves phosphodiester bonds at apurinic or apyrimidinic (AP) sites, generating a 3'-hydroxyl group and a 5'-terminal sugar phosphate. The sequence is that of Probable endonuclease 4 from Petrotoga mobilis (strain DSM 10674 / SJ95).